The chain runs to 128 residues: MNLATIASEIEVVKTNQKTIESKIDQILAKIGSTPDESSNLESVAAKIISDLTKEMKECHCNKEIVEILNKDKAIIPSPEQDSIQKRLSEPQYTFPNFDVGNEGMGSSTNPNALKWPPTEKPQPWPPR.

Coiled-coil stretches lie at residues 1 to 30 (MNLATIASEIEVVKTNQKTIESKIDQILAK) and 37 to 58 (ESSNLESVAAKIISDLTKEMKE). The disordered stretch occupies residues 98–128 (FDVGNEGMGSSTNPNALKWPPTEKPQPWPPR). Residues 119-128 (TEKPQPWPPR) are compositionally biased toward pro residues. Residues 122-128 (PQPWPPR) are capsid binding.

This sequence belongs to the caulimovirus ORF III family. In terms of assembly, homotetramer, through coiled-coil domain. Homotrimer when interacts with icosehadral capsid. Interacts with capsid protein, and with Movement protein.

The protein resides in the virion. It localises to the host cell junction. It is found in the host plasmodesma. In terms of biological role, plays a role in virus cell-to-cell and plant-to-plant transmission. Interacts with virion icosahedral capsid and movement protein, thereby facilitating virion cell-to-cell transmission through plasmodesmata opened by viral movement protein. Also interacts with aphid transmission factor, attaching the virion to aphid stylet when the animal feeds on an virus infected plant. Aphid saliva may later detach the virion, inducing release of infectious particles when the animal feeds on a new plant. The chain is Virion-associated protein from Carnation etched ring virus (CERV).